The sequence spans 113 residues: Large ribosomal subunit protein uL22 (113 aa).

This sequence belongs to the universal ribosomal protein uL22 family. Part of the 50S ribosomal subunit.

Functionally, this protein binds specifically to 23S rRNA; its binding is stimulated by other ribosomal proteins, e.g. L4, L17, and L20. It is important during the early stages of 50S assembly. It makes multiple contacts with different domains of the 23S rRNA in the assembled 50S subunit and ribosome. The globular domain of the protein is located near the polypeptide exit tunnel on the outside of the subunit, while an extended beta-hairpin is found that lines the wall of the exit tunnel in the center of the 70S ribosome. The polypeptide is Large ribosomal subunit protein uL22 (Magnetococcus marinus (strain ATCC BAA-1437 / JCM 17883 / MC-1)).